Here is a 569-residue protein sequence, read N- to C-terminus: Cysteine--tRNA ligase CPS1 homolog, chloroplastic/mitochondrial (569 aa).

A chloroplast and mitochondrion-targeting transit peptide spans Met-1–Tyr-42. Cys-99 lines the Zn(2+) pocket. Residues Val-101 to His-111 carry the 'HIGH' region motif. 3 residues coordinate Zn(2+): Cys-279, His-304, and Glu-308. The 'KMSKS' region signature appears at Lys-336–Ser-340. Lys-339 serves as a coordination point for ATP.

It belongs to the class-I aminoacyl-tRNA synthetase family. Zn(2+) serves as cofactor.

Its subcellular location is the plastid. It localises to the chloroplast. The protein resides in the mitochondrion. It carries out the reaction tRNA(Cys) + L-cysteine + ATP = L-cysteinyl-tRNA(Cys) + AMP + diphosphate. Its function is as follows. Nuclear genome-encoded factor required for normal assembly of chloroplast polysomes. This chain is Cysteine--tRNA ligase CPS1 homolog, chloroplastic/mitochondrial, found in Oryza sativa subsp. japonica (Rice).